Reading from the N-terminus, the 319-residue chain is ATP-dependent 6-phosphofructokinase (319 aa).

An ATP-binding site is contributed by glycine 11. An ADP-binding site is contributed by 21–25 (RAVVR). ATP contacts are provided by residues 72 to 73 (RS) and 102 to 105 (GDGS). Residue aspartate 103 coordinates Mg(2+). Residue 125-127 (TID) participates in substrate binding. Aspartate 127 (proton acceptor) is an active-site residue. An ADP-binding site is contributed by arginine 154. Residues arginine 162 and 169-171 (MGR) contribute to the substrate site. ADP contacts are provided by residues 185 to 187 (GAE) and 213 to 215 (KMH). Residues glutamate 222, arginine 243, and 249–252 (HIQR) each bind substrate.

It belongs to the phosphofructokinase type A (PFKA) family. ATP-dependent PFK group I subfamily. Prokaryotic clade 'B1' sub-subfamily. As to quaternary structure, homotetramer. Mg(2+) is required as a cofactor.

The protein localises to the cytoplasm. The catalysed reaction is beta-D-fructose 6-phosphate + ATP = beta-D-fructose 1,6-bisphosphate + ADP + H(+). It participates in carbohydrate degradation; glycolysis; D-glyceraldehyde 3-phosphate and glycerone phosphate from D-glucose: step 3/4. With respect to regulation, allosterically activated by ADP and other diphosphonucleosides, and allosterically inhibited by phosphoenolpyruvate. Catalyzes the phosphorylation of D-fructose 6-phosphate to fructose 1,6-bisphosphate by ATP, the first committing step of glycolysis. The sequence is that of ATP-dependent 6-phosphofructokinase from Clostridium tetani (strain Massachusetts / E88).